The sequence spans 145 residues: Ribosomal RNA large subunit methyltransferase H (145 aa).

S-adenosyl-L-methionine-binding positions include L64, G93, and L112 to F117.

Belongs to the RNA methyltransferase RlmH family. Homodimer.

It localises to the cytoplasm. It carries out the reaction pseudouridine(1915) in 23S rRNA + S-adenosyl-L-methionine = N(3)-methylpseudouridine(1915) in 23S rRNA + S-adenosyl-L-homocysteine + H(+). In terms of biological role, specifically methylates the pseudouridine at position 1915 (m3Psi1915) in 23S rRNA. The sequence is that of Ribosomal RNA large subunit methyltransferase H from Prochlorococcus marinus (strain NATL2A).